The primary structure comprises 144 residues: D-aminoacyl-tRNA deacylase (144 aa).

The short motif at 137 to 138 (GP) is the Gly-cisPro motif, important for rejection of L-amino acids element.

It belongs to the DTD family. As to quaternary structure, homodimer.

It is found in the cytoplasm. It carries out the reaction glycyl-tRNA(Ala) + H2O = tRNA(Ala) + glycine + H(+). The enzyme catalyses a D-aminoacyl-tRNA + H2O = a tRNA + a D-alpha-amino acid + H(+). Functionally, an aminoacyl-tRNA editing enzyme that deacylates mischarged D-aminoacyl-tRNAs. Also deacylates mischarged glycyl-tRNA(Ala), protecting cells against glycine mischarging by AlaRS. Acts via tRNA-based rather than protein-based catalysis; rejects L-amino acids rather than detecting D-amino acids in the active site. By recycling D-aminoacyl-tRNA to D-amino acids and free tRNA molecules, this enzyme counteracts the toxicity associated with the formation of D-aminoacyl-tRNA entities in vivo and helps enforce protein L-homochirality. The polypeptide is D-aminoacyl-tRNA deacylase (Marinomonas sp. (strain MWYL1)).